Reading from the N-terminus, the 160-residue chain is Heat shock protein beta-6 (160 aa).

The involved in stabilization of the HSPB1:HSBP6 heterodimer stretch occupies residues 1 to 72 (MEIPVPVQPS…PVAQVPTDPG (72 aa)). Ser-16 bears the Phosphoserine; by PKA mark. The sHSP domain occupies 55-160 (LRAPSVALPV…AQAPPPAAAK (106 aa)). Gln-66 bears the Deamidated glutamine mark.

This sequence belongs to the small heat shock protein (HSP20) family. In terms of assembly, homodimer. Small heat shock proteins form high molecular mass oligomers containing variable number of monomers; these oligomers display a very flexible quaternary structure easily exchanging their subunits. Heterooligomer with HSPB1; formed through oligomerization of HSPB1:HSBP6 dimers; subunit exchange leads to formation of at least two different heterooligomeric complexes, differing in variable quantities of HSPB1 and HSPB6 homodimers in addition to HSPB1:HSPB6 heterodimers. Heterooligomer with CRYAB; large heterooligomers consist of CRYAB homodimers and HSPB5:HSPB6 heterodimers but lacking HSPB6 homodimers. Interacts with BAG3. Interacts (phosphorylated) with YWHAZ. Interacts with PDE4A and PDE4D; required for maintenance of the non-phosphorylated state of HSPB6 under basal conditions. Interacts with KDR. Interacts with PRKD1. The N-terminus is blocked. In terms of processing, phosphorylated at Ser-16 by PKA and probably PKD1K; required to protect cardiomyocytes from apoptosis.

It is found in the cytoplasm. The protein resides in the nucleus. Its subcellular location is the secreted. Small heat shock protein which functions as a molecular chaperone probably maintaining denatured proteins in a folding-competent state. Seems to have versatile functions in various biological processes. Plays a role in regulating muscle function such as smooth muscle vasorelaxation and cardiac myocyte contractility. May regulate myocardial angiogenesis implicating KDR. Overexpression mediates cardioprotection and angiogenesis after induced damage. Stabilizes monomeric YWHAZ thereby supporting YWHAZ chaperone-like activity. The chain is Heat shock protein beta-6 (HSPB6) from Homo sapiens (Human).